A 560-amino-acid chain; its full sequence is Kinesin light chain 1 (560 aa).

Residues 27–156 adopt a coiled-coil conformation; sequence KTKQVIQGLE…HLEFMNQLKK (130 aa). Over residues 156–176 the composition is skewed to basic and acidic residues; it reads KYDDDISPSEDKDSDSSKEPL. The segment at 156–203 is disordered; that stretch reads KYDDDISPSEDKDSDSSKEPLDDLFPNDEDDPGQGIQQQHSSAAAAAQ. Position 162 is a phosphoserine (Ser-162). The span at 188 to 203 shows a compositional bias: low complexity; sequence GQGIQQQHSSAAAAAQ. TPR repeat units lie at residues 213–246, 255–288, 297–330, 339–372, and 381–414; these read LRTL…LEKT, ATML…REKT, AATL…REKV, AKQL…YQTK, and AKTK…AHER. Tyr-449 carries the post-translational modification Phosphotyrosine. At Ser-460 the chain carries Phosphoserine. The stretch at 464-497 is one TPR 6 repeat; sequence TTTLKNLGALYRRQGKFEAAETLEEAALRSRKQG. Ser-521 and Ser-524 each carry phosphoserine.

The protein belongs to the kinesin light chain family. Oligomeric complex composed of two heavy chains and two light chains. Interacts with SPAG9. Interacts with ATCAY; may link mitochondria to KLC1 and regulate mitochondria localization into neuron projections. Interacts (via TPR repeats) with TOR1A; the interaction associates TOR1A with the kinesin oligomeric complex. Interacts with BORCS5. Interacts with MAPK8IP3/JIP3 and NTRK2/TRKB; interaction with NTRK2/TRKB is mediated by MAPK8IP3/JIP3. Interacts with CLSTN1; phosphorylation at Ser-460 inhibits interaction with CLSTN1. Phosphorylation at Ser-460 by ERK inhibits interaction with CLSTN1 and localization to cytoplasmic vesicles. In terms of tissue distribution, expressed in brain (at protein level).

The protein localises to the cell projection. It localises to the growth cone. The protein resides in the cytoplasmic vesicle. Its subcellular location is the cytoplasm. It is found in the cytoskeleton. Kinesin is a microtubule-associated force-producing protein that may play a role in organelle transport. The light chain may function in coupling of cargo to the heavy chain or in the modulation of its ATPase activity. This is Kinesin light chain 1 (Klc1) from Rattus norvegicus (Rat).